We begin with the raw amino-acid sequence, 161 residues long: MGKRVVYPGTFDPPHYGHLDIVKRSARIFDEVVVAVAKKPRKFLLFDAEERVKMFEKMVEDIPNVEVKMFDCLLVDFMKREGINVIVRGVRLFTDFEYELQIALTNYKLAGVETVFMMPSQEYIHISSTIVRDVASYCGDLDNMVHPYVKQKLREKFNCGS.

Substrate is bound at residue Thr10. Residues 10-11 (TF) and His18 contribute to the ATP site. Residues Lys42, Leu74, and Arg88 each coordinate substrate. Residues 89-91 (GVR), Glu99, and 123-129 (YIHISST) contribute to the ATP site.

This sequence belongs to the bacterial CoaD family. Homohexamer. Mg(2+) is required as a cofactor.

The protein localises to the cytoplasm. The enzyme catalyses (R)-4'-phosphopantetheine + ATP + H(+) = 3'-dephospho-CoA + diphosphate. The protein operates within cofactor biosynthesis; coenzyme A biosynthesis; CoA from (R)-pantothenate: step 4/5. Functionally, reversibly transfers an adenylyl group from ATP to 4'-phosphopantetheine, yielding dephospho-CoA (dPCoA) and pyrophosphate. This chain is Phosphopantetheine adenylyltransferase, found in Aquifex aeolicus (strain VF5).